The primary structure comprises 230 residues: MCSDLIPRGVDYTKFRDAIIKWYREFGEKDLPWRKAGDPWAVLVAALLLRKTTVKQVVDIYREFLRRYPSPARLADASVEEIKAIIQPLGMEHVRATLLKKLSEELVRRFNGQIPCDRDALKSLPGVGDYAASEVLLTACGKPEPLLDRNMIRVIERVFGIKSKKRRPHTDRELWNFARSLVPRDPELAKEFNFGVLDFARKVCTAKSPKCSLCPLANNVCVFYQKRERV.

Residues Cys204, Cys211, Cys214, and Cys221 each contribute to the [4Fe-4S] cluster site.

Belongs to the Nth/MutY family. [4Fe-4S] cluster serves as cofactor.

It catalyses the reaction Hydrolyzes mismatched double-stranded DNA and polynucleotides, releasing free thymine.. In terms of biological role, DNA glycosylase that excises thymine from T/G mismatches and uracil from U/G mismatches. Can also process T/GO and U/GO, but not A/G, T/C and U/C. Has weak AP lyase activity. This is Thymine/uracil-DNA glycosylase from Pyrobaculum aerophilum (strain ATCC 51768 / DSM 7523 / JCM 9630 / CIP 104966 / NBRC 100827 / IM2).